Reading from the N-terminus, the 413-residue chain is MKSYLVGGAVRDALLGLPVKDRDWVVVGATPQQMLDAGYQQVGRDFPVFLHPQSREEYALARTERKSGAGYTGFTCYAAPDVTLEADLLRRDLTVNALAQDADGAIIDPYGGQNDLRKRLLRHVSPAFSEDPLRVLRVARFAARYAHLGFRIAEETQALMAAIVEAGELAHLTPERVWKETESALTTRNPQVFFQTLRDCQALKVLFPEIDALYGVPAPAKWHPEIDTGLHTLMTVTMAAMLSPDVDVRFATLCHDLGKGLTPKALWPRHHGHGPAGVKLVEQLCARLRVPNDIRDLAKLVAEYHDLIHTLPILQPKTLVKLFDSIDAWRKPQRVQQIALTSEADVRGRTGFEASDYPQGRLLLEAWEVAQSVSTKEVVAAGFKGAEIREELTRRRIAAVAQWKEQRCPQPQG.

2 residues coordinate ATP: Gly-8 and Arg-11. Positions 8 and 11 each coordinate CTP. Positions 21 and 23 each coordinate Mg(2+). Residues Arg-91, Arg-137, and Arg-140 each contribute to the ATP site. 3 residues coordinate CTP: Arg-91, Arg-137, and Arg-140. An HD domain is found at 228 to 329; the sequence is TGLHTLMTVT…VKLFDSIDAW (102 aa).

This sequence belongs to the tRNA nucleotidyltransferase/poly(A) polymerase family. Bacterial CCA-adding enzyme type 1 subfamily. As to quaternary structure, monomer. Can also form homodimers and oligomers. It depends on Mg(2+) as a cofactor. Requires Ni(2+) as cofactor.

It catalyses the reaction a tRNA precursor + 2 CTP + ATP = a tRNA with a 3' CCA end + 3 diphosphate. It carries out the reaction a tRNA with a 3' CCA end + 2 CTP + ATP = a tRNA with a 3' CCACCA end + 3 diphosphate. Its function is as follows. Catalyzes the addition and repair of the essential 3'-terminal CCA sequence in tRNAs without using a nucleic acid template. Adds these three nucleotides in the order of C, C, and A to the tRNA nucleotide-73, using CTP and ATP as substrates and producing inorganic pyrophosphate. tRNA 3'-terminal CCA addition is required both for tRNA processing and repair. Also involved in tRNA surveillance by mediating tandem CCA addition to generate a CCACCA at the 3' terminus of unstable tRNAs. While stable tRNAs receive only 3'-terminal CCA, unstable tRNAs are marked with CCACCA and rapidly degraded. This Klebsiella pneumoniae subsp. pneumoniae (strain ATCC 700721 / MGH 78578) protein is Multifunctional CCA protein.